Reading from the N-terminus, the 248-residue chain is Pulmonary surfactant-associated protein A (248 aa).

The first 17 residues, 1–17 (MWLRCLALALTLLMVSG), serve as a signal peptide directing secretion. Residue N20 is glycosylated (N-linked (GlcNAc...) asparagine). One can recognise a Collagen-like domain in the interval 28 to 100 (GNPGIPGTPG…PGERGPPGLP (73 aa)). A disordered region spans residues 29 to 103 (NPGIPGTPGS…RGPPGLPASL (75 aa)). 9 positions are modified to 4-hydroxyproline: P30, P33, P36, P42, P54, P57, P63, P67, and P70. Positions 42 to 51 (PGRDGRDGVK) are enriched in basic and acidic residues. Residues 54–65 (PGPPGPLGPPGG) show a composition bias toward pro residues. Residues 84-93 (ERGEKGEPGE) are compositionally biased toward basic and acidic residues. In terms of domain architecture, C-type lectin spans 132–248 (LVVGRKVFSS…LQYRLAICEF (117 aa)). 2 disulfides stabilise this stretch: C155–C246 and C224–C238. N207 carries an N-linked (GlcNAc...) asparagine glycan. Ca(2+)-binding residues include E215, R217, and N234.

This sequence belongs to the SFTPA family. In terms of assembly, oligomeric complex of 6 set of homotrimers.

It is found in the secreted. The protein resides in the extracellular space. It localises to the extracellular matrix. Its subcellular location is the surface film. Functionally, in presence of calcium ions, it binds to surfactant phospholipids and contributes to lower the surface tension at the air-liquid interface in the alveoli of the mammalian lung and is essential for normal respiration. Enhances the expression of MYO18A/SP-R210 on alveolar macrophages. This Canis lupus familiaris (Dog) protein is Pulmonary surfactant-associated protein A (SFTPA1).